The primary structure comprises 578 residues: GRAM domain-containing protein 4 (578 aa).

The stretch at 83–135 (HLEIALLEKHFLQEELRKLREETNIDTLKQELEKERQRRTELEQKITDIAKTR) forms a coiled coil. The interval 132-157 (AKTRTDESATQQLSKGPSQTNGADKQ) is disordered. Positions 139-154 (SATQQLSKGPSQTNGA) are enriched in polar residues. Helical transmembrane passes span 236–256 (IAFI…MFLF), 334–354 (MTQK…FFHY), and 356–376 (TIGL…DFIF). The GRAM domain occupies 446–524 (SSFHEIFSLL…TDITDIQKYK (79 aa)).

It is found in the mitochondrion membrane. The protein resides in the endoplasmic reticulum membrane. Plays a role as a mediator of e2f1-induced apoptosis in the absence of p53/TP53. In Xenopus laevis (African clawed frog), this protein is GRAM domain-containing protein 4 (gramd4).